The chain runs to 239 residues: 7-cyano-7-deazaguanine synthase (239 aa).

Position 8–18 (8–18 (LSGGLDSPTVL)) interacts with ATP. Cys-188, Cys-196, Cys-199, and Cys-202 together coordinate Zn(2+).

Belongs to the QueC family. Zn(2+) serves as cofactor.

The catalysed reaction is 7-carboxy-7-deazaguanine + NH4(+) + ATP = 7-cyano-7-deazaguanine + ADP + phosphate + H2O + H(+). Its pathway is purine metabolism; 7-cyano-7-deazaguanine biosynthesis. Functionally, catalyzes the ATP-dependent conversion of 7-carboxy-7-deazaguanine (CDG) to 7-cyano-7-deazaguanine (preQ(0)). The sequence is that of 7-cyano-7-deazaguanine synthase from Picrophilus torridus (strain ATCC 700027 / DSM 9790 / JCM 10055 / NBRC 100828 / KAW 2/3).